The sequence spans 101 residues: NADH-quinone oxidoreductase subunit K (101 aa).

3 helical membrane-spanning segments follow: residues 4 to 24 (LEHY…GIFL), 30 to 50 (IVIL…LVAF), and 65 to 85 (FVLT…VTFF).

It belongs to the complex I subunit 4L family. As to quaternary structure, NDH-1 is composed of 14 different subunits. Subunits NuoA, H, J, K, L, M, N constitute the membrane sector of the complex.

The protein localises to the cell inner membrane. It carries out the reaction a quinone + NADH + 5 H(+)(in) = a quinol + NAD(+) + 4 H(+)(out). Its function is as follows. NDH-1 shuttles electrons from NADH, via FMN and iron-sulfur (Fe-S) centers, to quinones in the respiratory chain. The immediate electron acceptor for the enzyme in this species is believed to be ubiquinone. Couples the redox reaction to proton translocation (for every two electrons transferred, four hydrogen ions are translocated across the cytoplasmic membrane), and thus conserves the redox energy in a proton gradient. In Cereibacter sphaeroides (strain ATCC 17029 / ATH 2.4.9) (Rhodobacter sphaeroides), this protein is NADH-quinone oxidoreductase subunit K.